A 382-amino-acid polypeptide reads, in one-letter code: Alkanesulfonate monooxygenase (382 aa).

This sequence belongs to the SsuD family. Homotetramer.

The enzyme catalyses an alkanesulfonate + FMNH2 + O2 = an aldehyde + FMN + sulfite + H2O + 2 H(+). In terms of biological role, catalyzes the desulfonation of aliphatic sulfonates. This is Alkanesulfonate monooxygenase from Buttiauxella sp. (strain PNBS).